The primary structure comprises 396 residues: Ornithine aminotransferase 2 (396 aa).

Residue K255 is modified to N6-(pyridoxal phosphate)lysine.

This sequence belongs to the class-III pyridoxal-phosphate-dependent aminotransferase family. OAT subfamily. The cofactor is pyridoxal 5'-phosphate.

The protein resides in the cytoplasm. It catalyses the reaction a 2-oxocarboxylate + L-ornithine = L-glutamate 5-semialdehyde + an L-alpha-amino acid. It functions in the pathway amino-acid biosynthesis; L-proline biosynthesis; L-glutamate 5-semialdehyde from L-ornithine: step 1/1. Functionally, catalyzes the interconversion of ornithine to glutamate semialdehyde. This is Ornithine aminotransferase 2 from Staphylococcus saprophyticus subsp. saprophyticus (strain ATCC 15305 / DSM 20229 / NCIMB 8711 / NCTC 7292 / S-41).